The following is a 423-amino-acid chain: Imidazolonepropionase (423 aa).

2 residues coordinate Fe(3+): H87 and H89. Residues H87 and H89 each contribute to the Zn(2+) site. The 4-imidazolone-5-propanoate site is built by R96, Y159, and H192. Residue Y159 participates in N-formimidoyl-L-glutamate binding. Position 257 (H257) interacts with Fe(3+). H257 serves as a coordination point for Zn(2+). E260 is a 4-imidazolone-5-propanoate binding site. D331 lines the Fe(3+) pocket. D331 is a binding site for Zn(2+). Residues N333 and G335 each contribute to the N-formimidoyl-L-glutamate site. S336 serves as a coordination point for 4-imidazolone-5-propanoate.

The protein belongs to the metallo-dependent hydrolases superfamily. HutI family. The cofactor is Zn(2+). Fe(3+) is required as a cofactor.

Its subcellular location is the cytoplasm. The enzyme catalyses 4-imidazolone-5-propanoate + H2O = N-formimidoyl-L-glutamate. The protein operates within amino-acid degradation; L-histidine degradation into L-glutamate; N-formimidoyl-L-glutamate from L-histidine: step 3/3. Its function is as follows. Catalyzes the hydrolytic cleavage of the carbon-nitrogen bond in imidazolone-5-propanoate to yield N-formimidoyl-L-glutamate. It is the third step in the universal histidine degradation pathway. This is Imidazolonepropionase from Porphyromonas gingivalis (strain ATCC BAA-308 / W83).